Here is a 527-residue protein sequence, read N- to C-terminus: Rhamnogalacturonate lyase A (527 aa).

The N-terminal stretch at 1-19 (MLKASLLSFVAFTAQVAHA) is a signal peptide. 2 disulfides stabilise this stretch: Cys49–Cys92 and Cys183–Cys192. Residue Asn350 is glycosylated (N-linked (GlcNAc...) asparagine).

The protein belongs to the polysaccharide lyase 4 family.

It localises to the secreted. The catalysed reaction is Endotype eliminative cleavage of L-alpha-rhamnopyranosyl-(1-&gt;4)-alpha-D-galactopyranosyluronic acid bonds of rhamnogalacturonan I domains in ramified hairy regions of pectin leaving L-rhamnopyranose at the reducing end and 4-deoxy-4,5-unsaturated D-galactopyranosyluronic acid at the non-reducing end.. Functionally, pectinolytic enzyme that has a positive effect in the apple hot-mash liquefaction process. This endolyase hydrolyzes the alpha-L-rhamnopyranosyl-(1,4)-alpha-D-galacturonopyranosyl glycosidic linkage by beta-elimination, thereby generating oligosaccharides terminating at the non-reducing end with a hex-4-enopyranosyluronic acid residue. The polypeptide is Rhamnogalacturonate lyase A (rglA) (Aspergillus aculeatus).